The primary structure comprises 393 residues: Acetylornithine aminotransferase 1 (393 aa).

Arg-131 is a binding site for N(2)-acetyl-L-ornithine. Residue 215–218 coordinates pyridoxal 5'-phosphate; that stretch reads DEVQ. Position 244 is an N6-(pyridoxal phosphate)lysine (Lys-244). Thr-272 lines the N(2)-acetyl-L-ornithine pocket. Thr-273 is a binding site for pyridoxal 5'-phosphate.

It belongs to the class-III pyridoxal-phosphate-dependent aminotransferase family. ArgD subfamily. As to quaternary structure, homodimer. Requires pyridoxal 5'-phosphate as cofactor.

Its subcellular location is the cytoplasm. It catalyses the reaction N(2)-acetyl-L-ornithine + 2-oxoglutarate = N-acetyl-L-glutamate 5-semialdehyde + L-glutamate. It participates in amino-acid biosynthesis; L-arginine biosynthesis; N(2)-acetyl-L-ornithine from L-glutamate: step 4/4. This is Acetylornithine aminotransferase 1 from Bordetella pertussis (strain Tohama I / ATCC BAA-589 / NCTC 13251).